The sequence spans 650 residues: L-aspartate N-monooxygenase (nitrosuccinate-forming) (650 aa).

Belongs to the nitrosuccinic acid synthase family. Requires FAD as cofactor.

The catalysed reaction is L-aspartate + 3 NADPH + 3 O2 + 2 H(+) = 2-nitrobutanedioate + 3 NADP(+) + 4 H2O. Involved in the biosynthesis of desferrioxamine derivatives which have iron-binding properties and may act as siderophores. Catalyzes the iterative oxidation of L-aspartic acid to nitrosuccinic acid (2-nitrobutanedioate) via N-hydroxyaspartic acid and nitrososuccinic acid. The sequence is that of L-aspartate N-monooxygenase (nitrosuccinate-forming) from Streptomyces davaonensis (strain DSM 101723 / JCM 4913 / KCC S-0913 / 768).